Reading from the N-terminus, the 357-residue chain is Peptide chain release factor 1 (357 aa).

The residue at position 234 (Gln234) is an N5-methylglutamine. Positions 284–304 are disordered; sequence RIEGERSEDRKSKIGTGDRSE.

Belongs to the prokaryotic/mitochondrial release factor family. In terms of processing, methylated by PrmC. Methylation increases the termination efficiency of RF1.

The protein resides in the cytoplasm. Functionally, peptide chain release factor 1 directs the termination of translation in response to the peptide chain termination codons UAG and UAA. This Pelagibacter ubique (strain HTCC1062) protein is Peptide chain release factor 1.